The following is a 277-amino-acid chain: NADPH-dependent 7-cyano-7-deazaguanine reductase (277 aa).

83–85 (VES) lines the substrate pocket. Residue 85-86 (SK) coordinates NADPH. The active-site Thioimide intermediate is the Cys-184. The Proton donor role is filled by Asp-191. A substrate-binding site is contributed by 223-224 (HE). 252–253 (RG) lines the NADPH pocket.

Belongs to the GTP cyclohydrolase I family. QueF type 2 subfamily. Homodimer.

It is found in the cytoplasm. It carries out the reaction 7-aminomethyl-7-carbaguanine + 2 NADP(+) = 7-cyano-7-deazaguanine + 2 NADPH + 3 H(+). It participates in tRNA modification; tRNA-queuosine biosynthesis. Its function is as follows. Catalyzes the NADPH-dependent reduction of 7-cyano-7-deazaguanine (preQ0) to 7-aminomethyl-7-deazaguanine (preQ1). This chain is NADPH-dependent 7-cyano-7-deazaguanine reductase, found in Cupriavidus taiwanensis (strain DSM 17343 / BCRC 17206 / CCUG 44338 / CIP 107171 / LMG 19424 / R1) (Ralstonia taiwanensis (strain LMG 19424)).